We begin with the raw amino-acid sequence, 21 residues long: Bradykinin-potentiating peptide K12 (21 aa).

The disordered stretch occupies residues 1–21 (LRDYANRVINGGPVEAAGPPA).

Expressed by the venom gland.

It is found in the secreted. Functionally, inhibits angiotensin-converting enzyme (ACE), but does not serve as substrate for the enzyme. Potentiate bradykinin (BK) on the isolated guinea pig ileum as well as the isolated rat uterus for contraction. Also potentiates in vivo the depressor effect of BK on arterial blood pressure in the normotensive anesthetized rat. Intracerebroventricular injection into mice does not show toxic activity. The polypeptide is Bradykinin-potentiating peptide K12 (Buthus occitanus (Common European scorpion)).